Consider the following 265-residue polypeptide: Glutamate racemase (265 aa).

Residues 10–11 and 42–43 each bind substrate; these read DS and YG. Catalysis depends on Cys-73, which acts as the Proton donor/acceptor. Residue 74 to 75 coordinates substrate; that stretch reads NT. Cys-183 functions as the Proton donor/acceptor in the catalytic mechanism. 184 to 185 contributes to the substrate binding site; that stretch reads TH.

Belongs to the aspartate/glutamate racemases family.

It carries out the reaction L-glutamate = D-glutamate. It participates in cell wall biogenesis; peptidoglycan biosynthesis. Functionally, provides the (R)-glutamate required for cell wall biosynthesis. The protein is Glutamate racemase of Corynebacterium diphtheriae (strain ATCC 700971 / NCTC 13129 / Biotype gravis).